The sequence spans 610 residues: Threonine--tRNA ligase (610 aa).

The segment at 1–29 (MANHDQQTVSSAAATTSASPSPVVLPKTS) is disordered. Positions 8 to 24 (TVSSAAATTSASPSPVV) are enriched in low complexity. The interval 209-502 (DHRRIGKDLD…MTENYAGDYP (294 aa)) is catalytic. Zn(2+) contacts are provided by C302, H353, and H479.

The protein belongs to the class-II aminoacyl-tRNA synthetase family. As to quaternary structure, homodimer. Requires Zn(2+) as cofactor.

The protein resides in the cytoplasm. The catalysed reaction is tRNA(Thr) + L-threonine + ATP = L-threonyl-tRNA(Thr) + AMP + diphosphate + H(+). Functionally, catalyzes the attachment of threonine to tRNA(Thr) in a two-step reaction: L-threonine is first activated by ATP to form Thr-AMP and then transferred to the acceptor end of tRNA(Thr). Also edits incorrectly charged L-seryl-tRNA(Thr). In Synechococcus sp. (strain WH7803), this protein is Threonine--tRNA ligase.